We begin with the raw amino-acid sequence, 706 residues long: Polyribonucleotide nucleotidyltransferase (706 aa).

Asp-486 and Asp-492 together coordinate Mg(2+). A KH domain is found at 553 to 612 (PRIHTIKISTDKIKDVIGKGGSVIRALTEETGTTIEIEDDGTVKIASTDGEKAKHAIRRI). The region spanning 622–690 (GRVYQGKVTR…RQGRVRLSIK (69 aa)) is the S1 motif domain.

The protein belongs to the polyribonucleotide nucleotidyltransferase family. As to quaternary structure, component of the RNA degradosome, which is a multiprotein complex involved in RNA processing and mRNA degradation. It depends on Mg(2+) as a cofactor.

The protein resides in the cytoplasm. It carries out the reaction RNA(n+1) + phosphate = RNA(n) + a ribonucleoside 5'-diphosphate. Involved in mRNA degradation. Catalyzes the phosphorolysis of single-stranded polyribonucleotides processively in the 3'- to 5'-direction. The protein is Polyribonucleotide nucleotidyltransferase of Pectobacterium carotovorum subsp. carotovorum (strain PC1).